The primary structure comprises 310 residues: Glutaminase (310 aa).

Positions 67, 118, 161, 168, 192, 244, and 262 each coordinate substrate.

It belongs to the glutaminase family. In terms of assembly, homotetramer.

It carries out the reaction L-glutamine + H2O = L-glutamate + NH4(+). This chain is Glutaminase, found in Legionella pneumophila (strain Lens).